A 66-amino-acid polypeptide reads, in one-letter code: Hemicalcin (66 aa).

The N-terminal stretch at 1–21 (MRASLFIVIFVVSFITISCLS) is a signal peptide. A propeptide spanning residues 22–33 (TDDEEARWIEKR) is cleaved from the precursor. 3 disulfide bridges follow: Cys36–Cys50, Cys43–Cys54, and Cys49–Cys65. The essential for stimulation of [3H]ryanodine binding to RYR1 stretch occupies residues 55 to 57 (KRR).

This sequence belongs to the scorpion calcin family. As to expression, expressed by the venom gland.

It is found in the secreted. Functionally, this toxin stabilizes ryanodine receptor 1 (RyR1) opening in a long-lasting subconductance state (20% and 38% of the full conductance state have been found). It promotes an increase in the opening probability at intermediate concentration. Furthermore, it triggers calcium release from sarcoplasmic vesicles (68 nM are enough to induce a sharp release, and 45% of the total calcium is released after toxin (100 nM) addition) probably by acting as a cell-penetrating peptide (CPP). In addition, it has been shown to dose-dependently stimulate ryanodine binding to RyR1 (EC(50)=6.9-71 nM). It also augments the bell-shaped calcium-[3H]ryanodine binding curve that is maximal at about 10 uM calcium concentration. It binds a different site as ryanodine. It acts synergistically with caffeine. In vivo, intracerebroventricular injection into mice induces neurotoxic symptoms, followed by death. In Hemiscorpius lepturus (Scorpion), this protein is Hemicalcin.